An 859-amino-acid chain; its full sequence is DNA mismatch repair protein MutS (859 aa).

617–624 (GPNMGGKS) lines the ATP pocket. The disordered stretch occupies residues 799-821 (ETTSLPHEQPRAKPGKPAVPQQS).

It belongs to the DNA mismatch repair MutS family.

Its function is as follows. This protein is involved in the repair of mismatches in DNA. It is possible that it carries out the mismatch recognition step. This protein has a weak ATPase activity. This chain is DNA mismatch repair protein MutS, found in Pseudomonas savastanoi pv. phaseolicola (strain 1448A / Race 6) (Pseudomonas syringae pv. phaseolicola (strain 1448A / Race 6)).